The sequence spans 129 residues: uncharacterized protein (129 aa).

This is an uncharacterized protein from Saccharomyces cerevisiae (strain ATCC 204508 / S288c) (Baker's yeast).